The sequence spans 306 residues: tRNA dimethylallyltransferase (306 aa).

9 to 16 is an ATP binding site; that stretch reads GPTAVGKT. Residue 11–16 participates in substrate binding; the sequence is TAVGKT. The segment at 34–37 is interaction with substrate tRNA; the sequence is DSRQ.

Belongs to the IPP transferase family. In terms of assembly, monomer. Mg(2+) is required as a cofactor.

The enzyme catalyses adenosine(37) in tRNA + dimethylallyl diphosphate = N(6)-dimethylallyladenosine(37) in tRNA + diphosphate. Its function is as follows. Catalyzes the transfer of a dimethylallyl group onto the adenine at position 37 in tRNAs that read codons beginning with uridine, leading to the formation of N6-(dimethylallyl)adenosine (i(6)A). The protein is tRNA dimethylallyltransferase of Roseiflexus castenholzii (strain DSM 13941 / HLO8).